Here is a 226-residue protein sequence, read N- to C-terminus: Large ribosomal subunit protein uL1 (226 aa).

The protein belongs to the universal ribosomal protein uL1 family. In terms of assembly, part of the 50S ribosomal subunit.

Functionally, binds directly to 23S rRNA. The L1 stalk is quite mobile in the ribosome, and is involved in E site tRNA release. Its function is as follows. Protein L1 is also a translational repressor protein, it controls the translation of the L11 operon by binding to its mRNA. The polypeptide is Large ribosomal subunit protein uL1 (Treponema pallidum (strain Nichols)).